The primary structure comprises 89 residues: Large ribosomal subunit protein bL27 (89 aa).

It belongs to the bacterial ribosomal protein bL27 family.

This Ruegeria sp. (strain TM1040) (Silicibacter sp.) protein is Large ribosomal subunit protein bL27.